A 429-amino-acid chain; its full sequence is Enolase (429 aa).

(2R)-2-phosphoglycerate is bound at residue Gln167. Glu209 acts as the Proton donor in catalysis. The Mg(2+) site is built by Asp246, Glu289, and Asp316. (2R)-2-phosphoglycerate-binding residues include Lys341, Arg370, Ser371, and Lys392. Lys341 serves as the catalytic Proton acceptor.

This sequence belongs to the enolase family. Component of the RNA degradosome, a multiprotein complex involved in RNA processing and mRNA degradation. Mg(2+) serves as cofactor.

Its subcellular location is the cytoplasm. It localises to the secreted. The protein resides in the cell surface. The enzyme catalyses (2R)-2-phosphoglycerate = phosphoenolpyruvate + H2O. It functions in the pathway carbohydrate degradation; glycolysis; pyruvate from D-glyceraldehyde 3-phosphate: step 4/5. In terms of biological role, catalyzes the reversible conversion of 2-phosphoglycerate (2-PG) into phosphoenolpyruvate (PEP). It is essential for the degradation of carbohydrates via glycolysis. This is Enolase from Pseudomonas fluorescens (strain ATCC BAA-477 / NRRL B-23932 / Pf-5).